A 197-amino-acid polypeptide reads, in one-letter code: Rac-like GTP-binding protein ARAC1 (197 aa).

13-20 (GDGAVGKT) provides a ligand contact to GTP. The Effector region motif lies at 35 to 43 (YVPTVFDNF). Residues 60 to 64 (DTAGQ) and 118 to 121 (TKLD) contribute to the GTP site. The residue at position 194 (C194) is a Cysteine methyl ester. C194 carries the S-geranylgeranyl cysteine lipid modification. Positions 195-197 (SIL) are cleaved as a propeptide — removed in mature form.

Belongs to the small GTPase superfamily. Rho family. Interacts with SPK1. As to expression, ubiquitous.

It localises to the cytoplasm. It is found in the membrane. Functionally, inactive GDP-bound Rho GTPases reside in the cytosol, are found in a complex with Rho GDP-dissociation inhibitors (Rho GDIs), and are released from the GDI protein in order to translocate to membranes upon activation. In Arabidopsis thaliana (Mouse-ear cress), this protein is Rac-like GTP-binding protein ARAC1 (ARAC1).